Reading from the N-terminus, the 714-residue chain is WD repeat and coiled-coil-containing protein (714 aa).

WD repeat units lie at residues 55–98 (GQFE…LEQN) and 154–194 (KGSG…LVPC). Disordered regions lie at residues 432–454 (EEST…SENF) and 531–564 (QASR…KEKN). Residues 567–595 (QLTQNMERIFTRFAEVQQCLSEIREFTQN) are a coiled coil. Positions 685–714 (RSARRKSPARPPSGADDFPPESPKSPSMEK) are disordered.

The protein is WD repeat and coiled-coil-containing protein (wdcp) of Danio rerio (Zebrafish).